We begin with the raw amino-acid sequence, 376 residues long: Chaperone protein DnaJ (376 aa).

In terms of domain architecture, J spans 4–69 (DFYETLGVQK…QKRAAYDRFG (66 aa)). Residues 133 to 211 (GKTAQIRVPA…CAGQGRVTEE (79 aa)) form a CR-type zinc finger. Cys146, Cys149, Cys163, Cys166, Cys185, Cys188, Cys199, and Cys202 together coordinate Zn(2+). CXXCXGXG motif repeat units follow at residues 146 to 153 (CTECSGSG), 163 to 170 (CSMCHGHG), 185 to 192 (CPQCQGRG), and 199 to 206 (CPKCAGQG).

The protein belongs to the DnaJ family. In terms of assembly, homodimer. Requires Zn(2+) as cofactor.

It localises to the cytoplasm. Its function is as follows. Participates actively in the response to hyperosmotic and heat shock by preventing the aggregation of stress-denatured proteins and by disaggregating proteins, also in an autonomous, DnaK-independent fashion. Unfolded proteins bind initially to DnaJ; upon interaction with the DnaJ-bound protein, DnaK hydrolyzes its bound ATP, resulting in the formation of a stable complex. GrpE releases ADP from DnaK; ATP binding to DnaK triggers the release of the substrate protein, thus completing the reaction cycle. Several rounds of ATP-dependent interactions between DnaJ, DnaK and GrpE are required for fully efficient folding. Also involved, together with DnaK and GrpE, in the DNA replication of plasmids through activation of initiation proteins. The sequence is that of Chaperone protein DnaJ from Mesorhizobium japonicum (strain LMG 29417 / CECT 9101 / MAFF 303099) (Mesorhizobium loti (strain MAFF 303099)).